A 254-amino-acid polypeptide reads, in one-letter code: MALQQSMAMPMMVVSGLGTAPRSSPMVQLQRMKKHLVVVAAFKSRTKASPKVDKSNKNKSIVEDGIFGTSGGIGFTKENELFVGRVAMLGFAASLLGEAVTGKGILAQLNLETGIPIYEAEPLLLFFILFTLLGAIGALGDRGRFVDDATGLERAVIPPGKGFRAALGLSEGGPLFGFTKANELFVGRLAQLGIAFSLIGEIITGKGALAQLNIETGVPINEIEPLLLFNILFFFFAAINPGTGKFVTDDNDDQ.

The N-terminal 38 residues, 1–38 (MALQQSMAMPMMVVSGLGTAPRSSPMVQLQRMKKHLVV), are a transit peptide targeting the chloroplast. 2 repeat units span residues 42–148 (FKSR…FVDD) and 149–253 (ATGL…DNDD). A run of 4 helical transmembrane segments spans residues 86-106 (VAML…KGIL), 120-140 (AEPL…GALG), 184-204 (LFVG…EIIT), and 219-239 (PINE…FAAI).

This sequence belongs to the ELIP/psbS family.

The protein localises to the plastid. It localises to the chloroplast thylakoid membrane. Functionally, involved in high light-mediated energy-dependent nonphotochemical quenching (NPQ, qE) and thermal dissipation (TD) thus regulating energy conversion in photosystem II and protecting from photoinhibition. Also seems to regulate quantum yield of electron transport in fluctuating light conditions. The chain is Photosystem II 22 kDa protein 2, chloroplastic from Oryza sativa subsp. indica (Rice).